The following is a 308-amino-acid chain: tRNA pseudouridine synthase B (308 aa).

Catalysis depends on Asp46, which acts as the Nucleophile.

It belongs to the pseudouridine synthase TruB family. Type 1 subfamily.

It carries out the reaction uridine(55) in tRNA = pseudouridine(55) in tRNA. Responsible for synthesis of pseudouridine from uracil-55 in the psi GC loop of transfer RNAs. The protein is tRNA pseudouridine synthase B of Marinomonas sp. (strain MWYL1).